A 219-amino-acid chain; its full sequence is MFKKKNVSLAVVRRLPRYLRYVEDLLNHDIMRISSSELSQRMGYTASQVRQDFNNFGGFGQQGYGYSTQVLYENLVKILGLDKNFKMIIVGVGNLGQALANYANFYKKGFRLVGLFDVDPQKVGKSIRNIKIQHIDELKDFIKKNDVDIGVLCVPSEVAQEVANLMVEGGIKGIWNFTAKEIEVKDDVVVENVHLIDSLMVLSYKLNEKLLEKQEASQK.

The segment at residues 17-56 is a DNA-binding region (H-T-H motif); the sequence is RYLRYVEDLLNHDIMRISSSELSQRMGYTASQVRQDFNNF. Position 91 to 96 (91 to 96) interacts with NAD(+); that stretch reads GVGNLG.

This sequence belongs to the transcriptional regulatory Rex family. In terms of assembly, homodimer.

The protein resides in the cytoplasm. Its function is as follows. Modulates transcription in response to changes in cellular NADH/NAD(+) redox state. This is Redox-sensing transcriptional repressor Rex from Caldicellulosiruptor saccharolyticus (strain ATCC 43494 / DSM 8903 / Tp8T 6331).